The chain runs to 98 residues: U-megalopygitoxin(1)-Mo1 (98 aa).

Residues 1–17 (MYRETFVFCVLLAVVSA) form the signal peptide.

This sequence belongs to the caterpillar 1 family. In terms of processing, contains 4 disulfide bonds. In terms of tissue distribution, expressed by the venom apparatus.

It is found in the secreted. Probable toxin. The sequence is that of U-megalopygitoxin(1)-Mo1 from Megalopyge opercularis (Southern flannel moth).